The following is a 561-amino-acid chain: DNA ligase B (561 aa).

Catalysis depends on Lys-125, which acts as the N6-AMP-lysine intermediate.

It belongs to the NAD-dependent DNA ligase family. LigB subfamily.

The enzyme catalyses NAD(+) + (deoxyribonucleotide)n-3'-hydroxyl + 5'-phospho-(deoxyribonucleotide)m = (deoxyribonucleotide)n+m + AMP + beta-nicotinamide D-nucleotide.. Functionally, catalyzes the formation of phosphodiester linkages between 5'-phosphoryl and 3'-hydroxyl groups in double-stranded DNA using NAD as a coenzyme and as the energy source for the reaction. The sequence is that of DNA ligase B from Escherichia coli O127:H6 (strain E2348/69 / EPEC).